The sequence spans 174 residues: Repair DNA polymerase X (174 aa).

Positions 42 to 51 (REEKMLNDVD) are involved in ssDNA binding. Mg(2+)-binding residues include Asp-49 and Asp-51. Cysteines 81 and 86 form a disulfide. Asp-100 provides a ligand contact to Mg(2+).

This sequence belongs to the DNA polymerase type-X family. Mg(2+) is required as a cofactor.

Its subcellular location is the virion. It catalyses the reaction DNA(n) + a 2'-deoxyribonucleoside 5'-triphosphate = DNA(n+1) + diphosphate. Functionally, error-prone polymerase lacking a proofreading 3'-5' exonuclease which catalyzes the gap-filling reaction during the DNA repair process. Specifically binds intermediates in the single-nucleotide base-excision repair process. Also catalyzes DNA polymerization with low nucleotide-insertion fidelity. Probably acts as a strategic DNA mutase, which gives rise to a rapid emergence of variants. Generates mismatched G-G pairs, in that case, the polymerase first binds the deoxynucleotide followed by mismatch formation. Together with the viral DNA ligase, fills the single nucleotide gaps generated by the AP endonuclease. Binds DNA with high affinity via the helix alphaE. This is Repair DNA polymerase X from African swine fever virus (isolate Tick/Malawi/Lil 20-1/1983) (ASFV).